The primary structure comprises 784 residues: uncharacterized protein (784 aa).

The 3'-5' exonuclease domain occupies 422–619 (IRIVQNEQDL…EVFQKIVEVV (198 aa)).

This is an uncharacterized protein from Caenorhabditis elegans.